The sequence spans 143 residues: Probable prefoldin subunit 2 (143 aa).

Belongs to the prefoldin subunit beta family. As to quaternary structure, heterohexamer of two PFD-alpha type and four PFD-beta type subunits.

In terms of biological role, binds specifically to cytosolic chaperonin (c-CPN) and transfers target proteins to it. Binds to nascent polypeptide chain and promotes folding in an environment in which there are many competing pathways for nonnative proteins. The protein is Probable prefoldin subunit 2 of Drosophila melanogaster (Fruit fly).